The primary structure comprises 397 residues: MDTLATSINQFALELSKKLAESAQGKNIFFSSWSISTSLAMVYLGTKGTTAAQMGQVLQFNRDQGVKSSPESEKKRKMEFNSSNSEEIHSDFHTLISEILKPNDDYLLKTANAIYGEKTYPFHNKYLEDMKTYFGAEPQSVNFVEASDQIRKEINSWVERQTEGKIQNLLPDDSVDSTTRMILVNALYFKGIWEHQFLVQNTTEKPFRINETTSKPVQMMFMKKKLQIFHIEKPQAVGLQLYYKSRDLSLLILLPEDINGLVQLEKDITYEKLNEWTSADMMELYEVQLHLPKFKLEDSYDLKSTLSSMGMSDAFSQSKADFSGMSSARNLFLSNVFHKAFVEINEQGTEAAAGTGSEIESRIRVPSIEFNANHPFLFFIRHNKTNSILFYGRLCSP.

Positions 62–85 (RDQGVKSSPESEKKRKMEFNSSNS) are disordered. Positions 70-79 (PESEKKRKME) are enriched in basic and acidic residues. Residues 74–77 (KKRK) carry the Nuclear localization signal motif.

It belongs to the serpin family. Ov-serpin subfamily.

The protein resides in the nucleus. It localises to the cytoplasm. Protease inhibitor that may play a role in the regulation of protease activities during hematopoiesis and apoptosis induced by TNF. May regulate protease activities in the cytoplasm and in the nucleus. This Papio anubis (Olive baboon) protein is Serpin B10 (SERPINB10).